The primary structure comprises 136 residues: Small ribosomal subunit protein uS12 (136 aa).

Asp-89 is subject to 3-methylthioaspartic acid. Residues 104-136 (TAGVNGRTQRRSKYGAKRPKPGQAAAAAKGKKK) are disordered. Residues 111-123 (TQRRSKYGAKRPK) show a composition bias toward basic residues. Residues 124 to 136 (PGQAAAAAKGKKK) are compositionally biased toward low complexity.

This sequence belongs to the universal ribosomal protein uS12 family. As to quaternary structure, part of the 30S ribosomal subunit. Contacts proteins S8 and S17. May interact with IF1 in the 30S initiation complex.

With S4 and S5 plays an important role in translational accuracy. In terms of biological role, interacts with and stabilizes bases of the 16S rRNA that are involved in tRNA selection in the A site and with the mRNA backbone. Located at the interface of the 30S and 50S subunits, it traverses the body of the 30S subunit contacting proteins on the other side and probably holding the rRNA structure together. The combined cluster of proteins S8, S12 and S17 appears to hold together the shoulder and platform of the 30S subunit. In Parabacteroides distasonis (strain ATCC 8503 / DSM 20701 / CIP 104284 / JCM 5825 / NCTC 11152), this protein is Small ribosomal subunit protein uS12.